Consider the following 326-residue polypeptide: tRNA N6-adenosine threonylcarbamoyltransferase (326 aa).

Fe cation contacts are provided by histidine 113 and histidine 117. Substrate-binding positions include valine 134–glycine 138, aspartate 167, glycine 180, and asparagine 267. Aspartate 291 contributes to the Fe cation binding site.

The protein belongs to the KAE1 / TsaD family. It depends on Fe(2+) as a cofactor.

Its subcellular location is the cytoplasm. It carries out the reaction L-threonylcarbamoyladenylate + adenosine(37) in tRNA = N(6)-L-threonylcarbamoyladenosine(37) in tRNA + AMP + H(+). Functionally, required for the formation of a threonylcarbamoyl group on adenosine at position 37 (t(6)A37) in tRNAs that read codons beginning with adenine. Is involved in the transfer of the threonylcarbamoyl moiety of threonylcarbamoyl-AMP (TC-AMP) to the N6 group of A37, together with TsaE and TsaB. TsaD likely plays a direct catalytic role in this reaction. This chain is tRNA N6-adenosine threonylcarbamoyltransferase, found in Thermus thermophilus (strain ATCC 27634 / DSM 579 / HB8).